A 37-amino-acid chain; its full sequence is Large ribosomal subunit protein bL36 (37 aa).

This sequence belongs to the bacterial ribosomal protein bL36 family.

The sequence is that of Large ribosomal subunit protein bL36 from Psychromonas ingrahamii (strain DSM 17664 / CCUG 51855 / 37).